The following is a 288-amino-acid chain: MSSRKQASQTRGQQSAEEDNFKKPTRSNMQRSKMRGAASGKKSAGSQPKNLDPALPGRWGGRSAENPPSGSVRKTRKNKQKAPGNGDGGSTSEVPQPPRKKRARADPTVESEEAFKSRMEVKVKIPEELKPWLVEDWDLVTRQKQLFQLPAKKNVDAILEEYANCKKSQGNVDNKEYAVNEVVGGIKEYFNVMLGTQLLYKFERPQYAEILLAHPDAPMSQIYGAPHLLRLFVRIGAMLAYTPLDEKSLALLLGYLHDFLKYLAKNSASLFTASDYKVASADYHRKAL.

Over residues 1-15 the composition is skewed to polar residues; it reads MSSRKQASQTRGQQS. The interval 1–115 is disordered; the sequence is MSSRKQASQT…DPTVESEEAF (115 aa). Serine 71 is modified (phosphoserine). The 172-residue stretch at 117–288 folds into the MRG domain; the sequence is SRMEVKVKIP…ASADYHRKAL (172 aa).

In terms of assembly, component of the NuA4 histone acetyltransferase complex which contains the catalytic subunit KAT5/TIP60 and the subunits EP400, TRRAP/PAF400, BRD8/SMAP, EPC1, DMAP1/DNMAP1, RUVBL1/TIP49, RUVBL2, ING3, actin, ACTL6A/BAF53A, MORF4L1/MRG15, MORF4L2/MRGX, MRGBP, YEATS4/GAS41 and VPS72/YL1. The NuA4 complex interacts with MYC and the adenovirus E1A protein. MORF4L1 may also participate in the formation of NuA4 related complexes which lack the KAT5/TIP60 catalytic subunit, but which include the SWI/SNF related protein SRCAP. Component of the MSIN3A histone deacetylase complex, which includes SIN3A, HDAC2, ARID4B, MORF4L1, RBBP4/RbAp48, and RBBP7/RbAp46. Interacts with MRFAP1 and RB1. May also interact with one or more as yet undefined members of the TLE (transducin-like enhancer of split) family of transcriptional repressors.

The protein localises to the nucleus. Component of the NuA4 histone acetyltransferase complex which is involved in transcriptional activation of select genes principally by acetylation of nucleosomal histone H4 and H2A. This modification may both alter nucleosome - DNA interactions and promote interaction of the modified histones with other proteins which positively regulate transcription. This complex may be required for the activation of transcriptional programs associated with oncogene and proto-oncogene mediated growth induction, tumor suppressor mediated growth arrest and replicative senescence, apoptosis, and DNA repair. The NuA4 complex ATPase and helicase activities seem to be, at least in part, contributed by the association of RUVBL1 and RUVBL2 with EP400. NuA4 may also play a direct role in DNA repair when directly recruited to sites of DNA damage. Also a component of the MSIN3A complex which acts to repress transcription by deacetylation of nucleosomal histones. The protein is Mortality factor 4-like protein 2 (Morf4l2) of Mus musculus (Mouse).